A 428-amino-acid polypeptide reads, in one-letter code: 5-methylthioadenosine/S-adenosylhomocysteine deaminase (428 aa).

Zn(2+)-binding residues include His-65 and His-67. Substrate-binding residues include Glu-94, Arg-158, and His-184. His-211 lines the Zn(2+) pocket. The substrate site is built by Glu-214 and Asp-299. Asp-299 provides a ligand contact to Zn(2+).

This sequence belongs to the metallo-dependent hydrolases superfamily. MTA/SAH deaminase family. Zn(2+) is required as a cofactor.

It catalyses the reaction S-adenosyl-L-homocysteine + H2O + H(+) = S-inosyl-L-homocysteine + NH4(+). The enzyme catalyses S-methyl-5'-thioadenosine + H2O + H(+) = S-methyl-5'-thioinosine + NH4(+). Catalyzes the deamination of 5-methylthioadenosine and S-adenosyl-L-homocysteine into 5-methylthioinosine and S-inosyl-L-homocysteine, respectively. Is also able to deaminate adenosine. This Moorella thermoacetica (strain ATCC 39073 / JCM 9320) protein is 5-methylthioadenosine/S-adenosylhomocysteine deaminase.